We begin with the raw amino-acid sequence, 309 residues long: tRNA pseudouridine synthase B (309 aa).

The active-site Nucleophile is the aspartate 39.

This sequence belongs to the pseudouridine synthase TruB family. Type 1 subfamily.

It catalyses the reaction uridine(55) in tRNA = pseudouridine(55) in tRNA. Responsible for synthesis of pseudouridine from uracil-55 in the psi GC loop of transfer RNAs. The chain is tRNA pseudouridine synthase B from Bacillus subtilis (strain 168).